We begin with the raw amino-acid sequence, 435 residues long: 3-phosphoshikimate 1-carboxyvinyltransferase (435 aa).

3-phosphoshikimate-binding residues include lysine 23, serine 24, and arginine 28. Phosphoenolpyruvate is bound at residue lysine 23. Residues glycine 96 and arginine 124 each contribute to the phosphoenolpyruvate site. 3-phosphoshikimate-binding residues include serine 167, serine 168, glutamine 169, serine 196, glutamate 311, and histidine 340. Position 169 (glutamine 169) interacts with phosphoenolpyruvate. Glutamate 311 functions as the Proton acceptor in the catalytic mechanism. Phosphoenolpyruvate is bound by residues arginine 344, arginine 385, and lysine 410.

The protein belongs to the EPSP synthase family. As to quaternary structure, monomer.

Its subcellular location is the cytoplasm. The enzyme catalyses 3-phosphoshikimate + phosphoenolpyruvate = 5-O-(1-carboxyvinyl)-3-phosphoshikimate + phosphate. Its pathway is metabolic intermediate biosynthesis; chorismate biosynthesis; chorismate from D-erythrose 4-phosphate and phosphoenolpyruvate: step 6/7. In terms of biological role, catalyzes the transfer of the enolpyruvyl moiety of phosphoenolpyruvate (PEP) to the 5-hydroxyl of shikimate-3-phosphate (S3P) to produce enolpyruvyl shikimate-3-phosphate and inorganic phosphate. This is 3-phosphoshikimate 1-carboxyvinyltransferase from Mycolicibacterium paratuberculosis (strain ATCC BAA-968 / K-10) (Mycobacterium paratuberculosis).